The primary structure comprises 320 residues: Cytochrome c biogenesis protein CcsA (320 aa).

Transmembrane regions (helical) follow at residues 14–34, 68–88, 101–121, 146–166, 226–246, 260–277, and 289–309; these read VLLL…WCFW, GHFP…ACTL, LVAA…SFAL, VIMV…AVLM, TITV…VWAN, TWAL…HTRL, and VASL…LLGI.

Belongs to the CcmF/CycK/Ccl1/NrfE/CcsA family. In terms of assembly, may interact with ccs1.

Its subcellular location is the cellular thylakoid membrane. Required during biogenesis of c-type cytochromes (cytochrome c6 and cytochrome f) at the step of heme attachment. The protein is Cytochrome c biogenesis protein CcsA of Synechococcus sp. (strain WH7803).